The primary structure comprises 335 residues: Zinc finger protein CO3 (335 aa).

The Zn(2+) site is built by C15, C18, C38, and H43. The B box-type; atypical zinc finger occupies 15 to 57 (CDSCRSAPCAFYCLADSAALCATCDADVHSVNPLARRHRRVPM). Residues 141 to 179 (AGEKEDASSSKDCSSSHGKSSEGSHEFAVPGEPVPERQG) are disordered. Residues 268–310 (REARVHRYREKRKTRRFEKTIRYASRKAYAETRPRIKGRFAKR) enclose the CCT domain.

Belongs to the CONSTANS family.

It is found in the nucleus. Its function is as follows. Probable transcription factor involved in the regulation of flowering time under short day (SD) conditions. Functions as a repressor of flowering under SD conditions, independently of HD1, EHD1, MADS50 and MADS51. Controls flowering time under SD conditions by negatively regulating the expression of HD3A and FTL. This Oryza sativa subsp. japonica (Rice) protein is Zinc finger protein CO3.